The following is a 371-amino-acid chain: 3-dehydroquinate synthase (371 aa).

NAD(+) is bound by residues 114–118 (GVVGD), 138–139 (TT), lysine 151, lysine 160, and 178–181 (TLNT). The Zn(2+) site is built by glutamate 193, histidine 258, and histidine 275.

It belongs to the sugar phosphate cyclases superfamily. Dehydroquinate synthase family. Requires Co(2+) as cofactor. Zn(2+) is required as a cofactor. NAD(+) serves as cofactor.

The protein resides in the cytoplasm. The catalysed reaction is 7-phospho-2-dehydro-3-deoxy-D-arabino-heptonate = 3-dehydroquinate + phosphate. It participates in metabolic intermediate biosynthesis; chorismate biosynthesis; chorismate from D-erythrose 4-phosphate and phosphoenolpyruvate: step 2/7. In terms of biological role, catalyzes the conversion of 3-deoxy-D-arabino-heptulosonate 7-phosphate (DAHP) to dehydroquinate (DHQ). The chain is 3-dehydroquinate synthase from Synechococcus sp. (strain CC9605).